We begin with the raw amino-acid sequence, 66 residues long: Large ribosomal subunit protein bL35 (66 aa).

The tract at residues 22 to 41 (VMSAQRGKRHGMIKRTKKQI) is disordered. Over residues 27 to 41 (RGKRHGMIKRTKKQI) the composition is skewed to basic residues.

This sequence belongs to the bacterial ribosomal protein bL35 family.

This Rhodopseudomonas palustris (strain TIE-1) protein is Large ribosomal subunit protein bL35.